The following is a 488-amino-acid chain: U3 small nucleolar RNA-associated protein 6 (488 aa).

4 HAT repeats span residues 31-63 (NNIIKTRRVFEEKLARRQVKLNDFLSYIQYEIN), 87-119 (AGPRKVLFLFLRATNKFFGDVTLWLDYIHYAQK), 121-153 (KAVNIVGKICVAALQKHPNNAELWVVACDHEFS), and 156-188 (ANVSAARALMNRALRLNQENPVIWAAYFRLELS).

The protein belongs to the UTP6 family. As to quaternary structure, component of the ribosomal small subunit (SSU) processome, composed of the 35S pre-rRNA precursor, the U3 snoRNA, and at least 40 protein subunits. Interacts with U3 snoRNA.

The protein localises to the nucleus. It is found in the nucleolus. Its function is as follows. Component of the SSU processome, a pre-ribosomal particle required for the maturation of the 18S rRNA from the 35S pre-rRNA precursor. This chain is U3 small nucleolar RNA-associated protein 6 (utp6), found in Schizosaccharomyces pombe (strain 972 / ATCC 24843) (Fission yeast).